Consider the following 288-residue polypeptide: 4-hydroxybenzoate octaprenyltransferase (288 aa).

6 helical membrane passes run 20–40 (IGTLLLLWPCLMALTFAAGGL), 43–63 (LKVFIIFVIGVFSMRACGCII), 96–116 (LFVVMALFSFGLVLMLNPLVV), 210–230 (QIIGLFQLAALSCFIIAGMVA), 234–254 (AIYAVGILAFIGFGLYQQKLI), and 262–282 (CFTAFLNNNWAGMVLFTALML).

It belongs to the UbiA prenyltransferase family. It depends on Mg(2+) as a cofactor.

The protein localises to the cell inner membrane. It carries out the reaction all-trans-octaprenyl diphosphate + 4-hydroxybenzoate = 4-hydroxy-3-(all-trans-octaprenyl)benzoate + diphosphate. Its pathway is cofactor biosynthesis; ubiquinone biosynthesis. Catalyzes the prenylation of para-hydroxybenzoate (PHB) with an all-trans polyprenyl group. Mediates the second step in the final reaction sequence of ubiquinone-8 (UQ-8) biosynthesis, which is the condensation of the polyisoprenoid side chain with PHB, generating the first membrane-bound Q intermediate 3-octaprenyl-4-hydroxybenzoate. In Shewanella pealeana (strain ATCC 700345 / ANG-SQ1), this protein is 4-hydroxybenzoate octaprenyltransferase.